We begin with the raw amino-acid sequence, 395 residues long: MTDRQTDTAPSPSYHLLPGRRRTVDAAASRGQGPEPAPGGGVEGVGARGVALKLFVQLLGCSRFGGAVVRAGEAEPSGAARSASSGREEPQPEEGEEEEEKEEERGPQWRLGARKPGSWTGEAAVCADSAPAARAPQALARASGRGGRVARRGAEESGPPHSPSRRGSASRAGPGRASETMNFLLSWVHWSLALLLYLHHAKWSQAAPMAEGGGQNHHEVVKFMDVYQRSYCHPIETLVDIFQEYPDEIEYIFKPSCVPLMRCGGCCNDEGLECVPTEESNITMQIMRIKPHQGQHIGEMSFLQHNKCECRPKKDRARQEKKSVRGKGKGQKRKRKKSRYKSWSVPCGPCSERRKHLFVQDPQTCKCSCKNTDSRCKARQLELNERTCRCDKPRR.

Disordered stretches follow at residues 1–45 (MTDR…VEGV) and 73–175 (EAEP…AGPG). Residues 73 to 85 (EAEPSGAARSASS) are compositionally biased toward low complexity. Acidic residues predominate over residues 91-102 (QPEEGEEEEEKE). Low complexity-rich tracts occupy residues 123-143 (AAVCADSAPAARAPQALARAS) and 165-175 (RRGSASRAGPG). 3 cysteine pairs are disulfide-bonded: cysteine 232/cysteine 274, cysteine 263/cysteine 308, and cysteine 267/cysteine 310. Asparagine 281 is a glycosylation site (N-linked (GlcNAc...) asparagine). The segment covering 314 to 323 (KDRARQEKKS) has biased composition (basic and acidic residues). The disordered stretch occupies residues 314–344 (KDRARQEKKSVRGKGKGQKRKRKKSRYKSWS). Residues 324–340 (VRGKGKGQKRKRKKSRY) show a composition bias toward basic residues.

This sequence belongs to the PDGF/VEGF growth factor family. As to quaternary structure, homodimer; disulfide-linked. Also found as heterodimer with PGF. Interacts with NRP1. Interacts with isoform 2 of BSG. Interacts with CD82; this interaction inhibits VEGFA-mediated signaling pathway. Produced by use of an alternative upstream CUG codon and post-translationally processed into the N-terminal N-VEGF form and the C-terminal secreted VEGFA form. As to expression, higher expression in pituitary tumors than the pituitary gland. Widely expressed. In terms of tissue distribution, not widely expressed.

It localises to the cytoplasm. The protein resides in the nucleus. The protein localises to the secreted. Its subcellular location is the endoplasmic reticulum. It is found in the golgi apparatus. It localises to the extracellular space. The protein resides in the extracellular matrix. Participates in the induction of key genes involved in the response to hypoxia and in the induction of angiogenesis such as HIF1A. Involved in protecting cells from hypoxia-mediated cell death. Functionally, growth factor active in angiogenesis, vasculogenesis and endothelial cell growth. Induces endothelial cell proliferation, promotes cell migration, inhibits apoptosis and induces permeabilization of blood vessels. Binds to the FLT1/VEGFR1 and KDR/VEGFR2 receptors, heparan sulfate and heparin. Binds to the NRP1/neuropilin-1 receptor. Binding to NRP1 initiates a signaling pathway needed for motor neuron axon guidance and cell body migration, including for the caudal migration of facial motor neurons from rhombomere 4 to rhombomere 6 during embryonic development. Also binds the DEAR/FBXW7-AS1 receptor. In terms of biological role, binds to the KDR receptor but does not activate downstream signaling pathways, does not activate angiogenesis and inhibits tumor growth. The protein is Vascular endothelial growth factor A, long form (VEGFA) of Homo sapiens (Human).